A 70-amino-acid chain; its full sequence is Large ribosomal subunit protein uL29 (70 aa).

The protein belongs to the universal ribosomal protein uL29 family.

The protein is Large ribosomal subunit protein uL29 (rpl29) of Methanocaldococcus jannaschii (strain ATCC 43067 / DSM 2661 / JAL-1 / JCM 10045 / NBRC 100440) (Methanococcus jannaschii).